The sequence spans 251 residues: Short chain dehydrogenase gsfK (251 aa).

Residues Leu14, Thr33, Glu60, Asn88, and Lys122 each coordinate NADP(+). Residues Ser143 and Tyr161 each act as proton donor in the active site. Tyr161, Lys165, Val192, and Thr194 together coordinate NADP(+). Lys165 serves as the catalytic Lowers pKa of active site Tyr.

The protein belongs to the short-chain dehydrogenases/reductases (SDR) family.

The protein operates within secondary metabolite biosynthesis; terpenoid biosynthesis. Its function is as follows. Short chain dehydrogenase; part of the gene cluster that mediates the biosynthesis of griseofulvin, an important antifungal drug that has been in use for a long time for treating dermatophyte infections. The first step of the pathway is the formation of the heptaketide backbone by gsfA which is initiated by priming with acetyl-CoA, followed by sequential condensations of 6 malonyl-CoA units. The resulting benzophenone can undergo a spontaneous dehydration to form norlichexanthone. However, the true precursor for the griseofulvin biosynthesis is not norlichexanthone, but the heptaketide benzophenone that is O-methylated at 3-OH by gsfB to produce griseophenone D which is further methylated at 9-OH by gsfC to yield griseophenone C. Griseophenone C is then substrate of halogenase gsfI which is responsible for the regio-specific chlorination at the C13 position to form griseophenone B. The cytochrome P450 gsfF catalyzes the coupling of orcinol and phloroglucinol rings in griseophenone B to form desmethyl-dehydrogriseofulvin A which is further methylated at 5-OH by gsfD to yield dehydrogriseofulvin. Finally, gsfE performs stereospecific reduction of enone 18 of dehydrogriseofulvin to afford the final product griseofulvin. The exact role of gsfK within the pathway has not been identified yet. The sequence is that of Short chain dehydrogenase gsfK from Penicillium aethiopicum.